An 829-amino-acid chain; its full sequence is Transcription activator GutR (829 aa).

Positions 42-61 form a DNA-binding region, H-T-H motif; the sequence is IDKIALQLGVSPNTIKSWIG. 200 to 207 provides a ligand contact to ATP; it reads GWAGMGKT. TPR repeat units follow at residues 697-730, 736-769, and 775-808; these read HRVL…SSTY, IEAY…KHNA, and IYYH…IDSW.

Its function is as follows. Activator of the glucitol dehydrogenase gene (gutB). The protein is Transcription activator GutR (gutR) of Bacillus subtilis (strain 168).